Here is a 160-residue protein sequence, read N- to C-terminus: Protein MGF 300-2R (160 aa).

Belongs to the asfivirus MGF 300 family.

Functionally, plays a role in virus cell tropism, and may be required for efficient virus replication in macrophages. The polypeptide is Protein MGF 300-2R (Ornithodoros (relapsing fever ticks)).